A 358-amino-acid chain; its full sequence is Polyadenylate-binding protein-interacting protein 11 (358 aa).

Positions 1–19 (MAVVETGAAATAADAGGVV) are enriched in low complexity. The disordered stretch occupies residues 1-45 (MAVVETGAAATAADAGGVVIQPPPSSPPSSMTSQDSGVSSDDQNH). The span at 31-41 (MTSQDSGVSSD) shows a compositional bias: polar residues. A PAM2-like motif is present at residues 92–102 (KLNPMAEEFVP). The disordered stretch occupies residues 136-164 (GGYGNENGGFRRKKSFGQGKRRMNARTSM). Basic residues predominate over residues 145–159 (FRRKKSFGQGKRRMN). The Bipartite nuclear localization signal signature appears at 146-157 (RRKKSFGQGKRR). RRM domains follow at residues 173–248 (RTVY…PSKT) and 270–346 (RTIY…PSKT).

Expressed in cauline leaves, stems, immature siliques and primary inflorescences.

The protein resides in the nucleus. This Arabidopsis thaliana (Mouse-ear cress) protein is Polyadenylate-binding protein-interacting protein 11 (CID11).